The primary structure comprises 484 residues: Folate synthesis bifunctional protein (484 aa).

Residues 15–141 form an HPPK region; sequence VIALGSNVGN…PFVLAPLVDL (127 aa). The region spanning 202–470 is the Pterin-binding domain; it reads TYVMGILNLT…NVRDNVDAAR (269 aa). A DHPS region spans residues 204–484; it reads VMGILNLTPD…MMTKRFKNVD (281 aa). Asn-209 serves as a coordination point for Mg(2+). (7,8-dihydropterin-6-yl)methyl diphosphate is bound by residues Thr-249, Asp-286, Asn-305, Asp-378, Lys-423, and 458–460; that span reads RVH.

This sequence in the N-terminal section; belongs to the HPPK family. In the C-terminal section; belongs to the DHPS family. Requires Mg(2+) as cofactor. Expressed exclusively in reproductive tissues.

The protein resides in the cytoplasm. It localises to the cytosol. The enzyme catalyses 6-hydroxymethyl-7,8-dihydropterin + ATP = (7,8-dihydropterin-6-yl)methyl diphosphate + AMP + H(+). It carries out the reaction (7,8-dihydropterin-6-yl)methyl diphosphate + 4-aminobenzoate = 7,8-dihydropteroate + diphosphate. It participates in cofactor biosynthesis; tetrahydrofolate biosynthesis; 2-amino-4-hydroxy-6-hydroxymethyl-7,8-dihydropteridine diphosphate from 7,8-dihydroneopterin triphosphate: step 4/4. It functions in the pathway cofactor biosynthesis; tetrahydrofolate biosynthesis; 7,8-dihydrofolate from 2-amino-4-hydroxy-6-hydroxymethyl-7,8-dihydropteridine diphosphate and 4-aminobenzoate: step 1/2. Its activity is regulated as follows. Inhibited by sulfanilamide. Catalyzes the first two consecutive steps of tetrahydrofolate biosynthesis. Plays a role in seed stress response and survival. In Arabidopsis thaliana (Mouse-ear cress), this protein is Folate synthesis bifunctional protein.